A 184-amino-acid polypeptide reads, in one-letter code: Large ribosomal subunit protein uL22 (184 aa).

It belongs to the universal ribosomal protein uL22 family. In terms of assembly, part of the 50S ribosomal subunit.

In terms of biological role, this protein binds specifically to 23S rRNA. It makes multiple contacts with different domains of the 23S rRNA in the assembled 50S subunit and ribosome. The globular domain of the protein is located near the polypeptide exit tunnel on the outside of the subunit, while an extended beta-hairpin is found that lines the wall of the exit tunnel in the center of the 70S ribosome. The polypeptide is Large ribosomal subunit protein uL22 (Pyrobaculum calidifontis (strain DSM 21063 / JCM 11548 / VA1)).